A 66-amino-acid chain; its full sequence is Large ribosomal subunit protein bL33c (66 aa).

It belongs to the bacterial ribosomal protein bL33 family.

The protein resides in the plastid. It localises to the chloroplast. This chain is Large ribosomal subunit protein bL33c, found in Lepidium virginicum (Virginia pepperweed).